The sequence spans 233 residues: ATP synthase subunit a, chloroplastic (233 aa).

Transmembrane regions (helical) follow at residues 82-102, 121-141, 177-199, and 211-231; these read VPFIGTLFLFIFVSNWSGALI, INTTAALALLTSLAYFYAGIS, LFGNILADELVVSVLTLLVPLIV, and SSIQALIFATLAAAYIGEAIE.

The protein belongs to the ATPase A chain family. F-type ATPases have 2 components, CF(1) - the catalytic core - and CF(0) - the membrane proton channel. CF(1) has five subunits: alpha(3), beta(3), gamma(1), delta(1), epsilon(1). CF(0) has four main subunits: a, b, b' and c.

It localises to the plastid. Its subcellular location is the chloroplast thylakoid membrane. Key component of the proton channel; it plays a direct role in the translocation of protons across the membrane. The polypeptide is ATP synthase subunit a, chloroplastic (Galdieria sulphuraria (Red alga)).